Reading from the N-terminus, the 148-residue chain is 1,4-dihydroxy-2-naphthoyl-CoA hydrolase (148 aa).

Aspartate 15 is a catalytic residue.

The protein belongs to the 4-hydroxybenzoyl-CoA thioesterase family. DHNA-CoA hydrolase subfamily.

The enzyme catalyses 1,4-dihydroxy-2-naphthoyl-CoA + H2O = 1,4-dihydroxy-2-naphthoate + CoA + H(+). The protein operates within cofactor biosynthesis; phylloquinone biosynthesis. It participates in quinol/quinone metabolism; 1,4-dihydroxy-2-naphthoate biosynthesis; 1,4-dihydroxy-2-naphthoate from chorismate: step 7/7. In terms of biological role, catalyzes the hydrolysis of 1,4-dihydroxy-2-naphthoyl-CoA (DHNA-CoA) to 1,4-dihydroxy-2-naphthoate (DHNA), a reaction involved in phylloquinone (vitamin K1) biosynthesis. The sequence is that of 1,4-dihydroxy-2-naphthoyl-CoA hydrolase from Nostoc sp. (strain PCC 7120 / SAG 25.82 / UTEX 2576).